The chain runs to 440 residues: O-glycoside alpha-1,2-mannosyltransferase homolog 4 (440 aa).

Topologically, residues 1–35 are cytoplasmic; sequence MLGWNKHVFFSESRINFRCLLRKKLKKRCPLSARF. The helical; Signal-anchor for type II membrane protein transmembrane segment at 36-56 threads the bilayer; sequence VLVLLLIVLIFILKMGYKQLI. Residues 57 to 440 are Lumenal-facing; sequence YKLNHPPLRR…NLIGDGFLDE (384 aa). Residue E336 is the Nucleophile of the active site.

This sequence belongs to the glycosyltransferase 15 family.

The protein resides in the cytoplasm. It localises to the nucleus. The protein localises to the golgi apparatus membrane. Probable mannosyltransferase involved in O-glycosylation of cell wall and secreted proteins. Transfers an alpha-D-mannosyl residue from GDP-mannose into lipid-linked oligosaccharide, forming an alpha-(1-&gt;2)-D-mannosyl-D-mannose linkage. In Schizosaccharomyces pombe (strain 972 / ATCC 24843) (Fission yeast), this protein is O-glycoside alpha-1,2-mannosyltransferase homolog 4 (omh4).